Consider the following 510-residue polypeptide: 2,3-bisphosphoglycerate-independent phosphoglycerate mutase (510 aa).

Residues D12 and S62 each coordinate Mn(2+). The active-site Phosphoserine intermediate is the S62. Substrate-binding positions include H123, 153–154 (RD), R185, R191, 260–263 (RPDR), and K335. Positions 402, 406, 443, 444, and 461 each coordinate Mn(2+).

The protein belongs to the BPG-independent phosphoglycerate mutase family. As to quaternary structure, monomer. It depends on Mn(2+) as a cofactor.

The enzyme catalyses (2R)-2-phosphoglycerate = (2R)-3-phosphoglycerate. Its pathway is carbohydrate degradation; glycolysis; pyruvate from D-glyceraldehyde 3-phosphate: step 3/5. Functionally, catalyzes the interconversion of 2-phosphoglycerate and 3-phosphoglycerate. The chain is 2,3-bisphosphoglycerate-independent phosphoglycerate mutase from Listeria monocytogenes serotype 4b (strain F2365).